Consider the following 249-residue polypeptide: Ubiquinone/menaquinone biosynthesis C-methyltransferase UbiE (249 aa).

S-adenosyl-L-methionine contacts are provided by residues T72, D93, and 121–122; that span reads DA.

The protein belongs to the class I-like SAM-binding methyltransferase superfamily. MenG/UbiE family.

The enzyme catalyses a 2-demethylmenaquinol + S-adenosyl-L-methionine = a menaquinol + S-adenosyl-L-homocysteine + H(+). It carries out the reaction a 2-methoxy-6-(all-trans-polyprenyl)benzene-1,4-diol + S-adenosyl-L-methionine = a 5-methoxy-2-methyl-3-(all-trans-polyprenyl)benzene-1,4-diol + S-adenosyl-L-homocysteine + H(+). It functions in the pathway quinol/quinone metabolism; menaquinone biosynthesis; menaquinol from 1,4-dihydroxy-2-naphthoate: step 2/2. Its pathway is cofactor biosynthesis; ubiquinone biosynthesis. In terms of biological role, methyltransferase required for the conversion of demethylmenaquinol (DMKH2) to menaquinol (MKH2) and the conversion of 2-polyprenyl-6-methoxy-1,4-benzoquinol (DDMQH2) to 2-polyprenyl-3-methyl-6-methoxy-1,4-benzoquinol (DMQH2). This Cellvibrio japonicus (strain Ueda107) (Pseudomonas fluorescens subsp. cellulosa) protein is Ubiquinone/menaquinone biosynthesis C-methyltransferase UbiE.